The chain runs to 463 residues: ATP-dependent protease ATPase subunit HslU (463 aa).

Residues isoleucine 19, 61–66, aspartate 277, glutamate 341, and arginine 413 contribute to the ATP site; that span reads GVGKTE.

The protein belongs to the ClpX chaperone family. HslU subfamily. In terms of assembly, a double ring-shaped homohexamer of HslV is capped on each side by a ring-shaped HslU homohexamer. The assembly of the HslU/HslV complex is dependent on binding of ATP.

The protein localises to the cytoplasm. ATPase subunit of a proteasome-like degradation complex; this subunit has chaperone activity. The binding of ATP and its subsequent hydrolysis by HslU are essential for unfolding of protein substrates subsequently hydrolyzed by HslV. HslU recognizes the N-terminal part of its protein substrates and unfolds these before they are guided to HslV for hydrolysis. The polypeptide is ATP-dependent protease ATPase subunit HslU (Bacillus cytotoxicus (strain DSM 22905 / CIP 110041 / 391-98 / NVH 391-98)).